A 224-amino-acid chain; its full sequence is MSTELVEDETQFYGKAQNYWKNVPPTVDGMLGGYGHISNVDLNGSKKFLQRFLRQEGSNKTGNACALDCGAGIGRITKRLLLPLFKTVDMVDVTDEFLNKAKSFLGEEGKRVGNYFCCGLQEFSPEPNRYDVIWIQWVIGHLTDEHLVNFLQRCRLGLRPNGIIVIKDNVTQDASIMDDVDSSICREIDLVRKLIKQAGLSILAVERQENFPDEIYHVFSFAMR.

S-adenosyl-L-methionine contacts are provided by residues G70, R75, 92 to 94 (DVT), 120 to 121 (LQ), and Q136.

This sequence belongs to the methyltransferase superfamily. NTM1 family.

It localises to the nucleus. The enzyme catalyses N-terminal L-alanyl-L-prolyl-L-lysyl-[protein] + 3 S-adenosyl-L-methionine = N-terminal N,N,N-trimethyl-L-alanyl-L-prolyl-L-lysyl-[protein] + 3 S-adenosyl-L-homocysteine + 3 H(+). The catalysed reaction is N-terminal L-seryl-L-prolyl-L-lysyl-[protein] + 3 S-adenosyl-L-methionine = N-terminal N,N,N-trimethyl-L-seryl-L-prolyl-L-lysyl-[protein] + 3 S-adenosyl-L-homocysteine + 3 H(+). It catalyses the reaction N-terminal L-prolyl-L-prolyl-L-lysyl-[protein] + 2 S-adenosyl-L-methionine = N-terminal N,N-dimethyl-L-prolyl-L-prolyl-L-lysyl-[protein] + 2 S-adenosyl-L-homocysteine + 2 H(+). Distributive alpha-N-methyltransferase that methylates the N-terminus of target proteins containing the N-terminal motif [Ala/Gly/Pro/Ser]-Pro-Lys when the initiator Met is cleaved. Specifically catalyzes mono-, di- or tri-methylation of the exposed alpha-amino group of the Ala, Gly or Ser residue in the [Ala/Gly/Ser]-Pro-Lys motif and mono- or di-methylation of Pro in the Pro-Pro-Lys motif. Required during mitosis for normal bipolar spindle formation and chromosome segregation via its action on target proteins. The protein is N-terminal Xaa-Pro-Lys N-methyltransferase 1-A (ntmt1-a) of Xenopus laevis (African clawed frog).